A 59-amino-acid polypeptide reads, in one-letter code: MMKRQKRDRLERARARGYQAGVVGKQKEACPYQCLDARGHWLGGWRDAMEGRGSGLFMK.

This sequence belongs to the ribosome modulation factor family.

It localises to the cytoplasm. Its function is as follows. During stationary phase, converts 70S ribosomes to an inactive dimeric form (100S ribosomes). The polypeptide is Ribosome modulation factor (Aeromonas veronii (strain B565)).